An 823-amino-acid polypeptide reads, in one-letter code: Zygotic DNA replication licensing factor mcm6-A (823 aa).

The segment at 159–186 (CLDCQTLVRDVEQQFKYTQPSICRNPVC) adopts a C4-type zinc-finger fold. One can recognise an MCM domain in the interval 347-554 (LYHNLCTSLF…TDYAIARRIV (208 aa)). 397–404 (GDPSTAKS) contacts ATP. The Arginine finger signature appears at 529–532 (SRFD). The segment at 663–710 (PDVNLDQDDEHEPEDETQEGTNGDAEVPNGVNGHVNGINGHSQESNAA) is disordered. Over residues 667-680 (LDQDDEHEPEDETQ) the composition is skewed to acidic residues. The segment covering 691 to 703 (NGVNGHVNGINGH) has biased composition (low complexity).

It belongs to the MCM family. Component of the mcm2-7 complex (RLF-M). The complex forms a toroidal hexameric ring with the proposed subunit order mcm2-mcm6-mcm4-mcm7-mcm3-mcm5 (By simililarity). Begins to associate with zmcm3, mcm4 and mcm7 into mcm complexes at the neurula stage. May replace mmcm6 in the complex that functions during licensing of DNA replication.

It is found in the nucleus. It catalyses the reaction ATP + H2O = ADP + phosphate + H(+). Functionally, acts as a component of the mcm2-7 complex (mcm complex) which is the putative replicative helicase essential for 'once per cell cycle' DNA replication initiation and elongation in eukaryotic cells. The active ATPase sites in the mcm2-7 ring are formed through the interaction surfaces of two neighboring subunits such that a critical structure of a conserved arginine finger motif is provided in trans relative to the ATP-binding site of the Walker A box of the adjacent subunit. The six ATPase active sites, however, are likely to contribute differentially to the complex helicase activity. The existence of maternal and zygotic forms of mcm3 and mcm6 suggests that specific forms of mcm2-7 complexes may be used during different stages of development. May replace mmcm6 in the mcm2-7 complex. In Xenopus laevis (African clawed frog), this protein is Zygotic DNA replication licensing factor mcm6-A (zmcm6-a).